The chain runs to 201 residues: 3-isopropylmalate dehydratase small subunit (201 aa).

Belongs to the LeuD family. LeuD type 1 subfamily. As to quaternary structure, heterodimer of LeuC and LeuD.

The catalysed reaction is (2R,3S)-3-isopropylmalate = (2S)-2-isopropylmalate. Its pathway is amino-acid biosynthesis; L-leucine biosynthesis; L-leucine from 3-methyl-2-oxobutanoate: step 2/4. Functionally, catalyzes the isomerization between 2-isopropylmalate and 3-isopropylmalate, via the formation of 2-isopropylmaleate. The polypeptide is 3-isopropylmalate dehydratase small subunit (Roseobacter denitrificans (strain ATCC 33942 / OCh 114) (Erythrobacter sp. (strain OCh 114))).